The following is a 130-amino-acid chain: Small ribosomal subunit protein uS9 (130 aa).

It belongs to the universal ribosomal protein uS9 family.

The chain is Small ribosomal subunit protein uS9 from Buchnera aphidicola subsp. Baizongia pistaciae (strain Bp).